We begin with the raw amino-acid sequence, 513 residues long: MDNNEIIGYTIGETRIDELTFLAKEAPKVGDYVKINYDDSELLGMVESTIQGNMALEDILNIEHLEKIREFEDNSSYYILGKIKVLGDIRDLNKDGALKLPRVPPKPGIPIYRADDELLKKVFGNGHLKIGHLVTREDVEVKLDANKLCSRHLAILAMTGMGKSNTVAVLLRELNKLKATVLVFDMHGEYKDIYCESEKLRVHIIEPKINIYRINDDDLCDLAGVDAQATKQRPYIRKAIKEIKEERKEHDFSTVDDYINAIIGKLEEYKSNDNYKKDESSIQTAIFRLEDMLQFRKNIITLHYNPINDIREHYINIIPMEELDENAVDIVVSYIAKAVLDDRKRIIIDKGRDFAKPIFMIFEEAHLIAPQHRKTRAKHYLSRIAREGRKFGVGLCLVSQRPKTLDAETLSQCSNLIISKLIEPTDQKHVQMASENLSEDLVKQLTSLNIGEAIILGPCIKVPAIVKVDKFDGRYGGEDLNLVELWEKDFINTERLKTDDIEENAFGDDDLFS.

ATP is bound by residues Arg-151, 160-165, and 467-468; these read GMGKSN and KV.

It belongs to the HerA family.

It carries out the reaction Couples ATP hydrolysis with the unwinding of duplex DNA at the replication fork by translocating in the 5'-3' direction. This creates two antiparallel DNA single strands (ssDNA). The leading ssDNA polymer is the template for DNA polymerase III holoenzyme which synthesizes a continuous strand.. The enzyme catalyses ATP + H2O = ADP + phosphate + H(+). The catalysed reaction is Couples ATP hydrolysis with the unwinding of duplex DNA by translocating in the 3'-5' direction.. Its function is as follows. A probably bidirectional DNA helicase. In Methanocaldococcus jannaschii (strain ATCC 43067 / DSM 2661 / JAL-1 / JCM 10045 / NBRC 100440) (Methanococcus jannaschii), this protein is Probable helicase MJ1565.